Consider the following 297-residue polypeptide: Formamidopyrimidine-DNA glycosylase (297 aa).

The Schiff-base intermediate with DNA role is filled by P2. E3 (proton donor) is an active-site residue. The active-site Proton donor; for beta-elimination activity is K61. The DNA site is built by R120 and R176. Residues 262-296 (HVYGRQGQPCDRCGTAIVRESFMNRGSHFCPRCQR) form an FPG-type zinc finger. R286 (proton donor; for delta-elimination activity) is an active-site residue.

It belongs to the FPG family. In terms of assembly, monomer. Zn(2+) is required as a cofactor.

The catalysed reaction is Hydrolysis of DNA containing ring-opened 7-methylguanine residues, releasing 2,6-diamino-4-hydroxy-5-(N-methyl)formamidopyrimidine.. It catalyses the reaction 2'-deoxyribonucleotide-(2'-deoxyribose 5'-phosphate)-2'-deoxyribonucleotide-DNA = a 3'-end 2'-deoxyribonucleotide-(2,3-dehydro-2,3-deoxyribose 5'-phosphate)-DNA + a 5'-end 5'-phospho-2'-deoxyribonucleoside-DNA + H(+). In terms of biological role, involved in base excision repair of DNA damaged by oxidation or by mutagenic agents. Acts as a DNA glycosylase that recognizes and removes damaged bases. Has a preference for oxidized purines, such as 7,8-dihydro-8-oxoguanine (8-oxoG). Has AP (apurinic/apyrimidinic) lyase activity and introduces nicks in the DNA strand. Cleaves the DNA backbone by beta-delta elimination to generate a single-strand break at the site of the removed base with both 3'- and 5'-phosphates. The protein is Formamidopyrimidine-DNA glycosylase of Leifsonia xyli subsp. xyli (strain CTCB07).